A 102-amino-acid chain; its full sequence is Small ribosomal subunit protein eS24 (102 aa).

The protein belongs to the eukaryotic ribosomal protein eS24 family.

In Methanobrevibacter smithii (strain ATCC 35061 / DSM 861 / OCM 144 / PS), this protein is Small ribosomal subunit protein eS24.